The chain runs to 491 residues: Stromelysin-3 (491 aa).

The first 35 residues, 1 to 35, serve as a signal peptide directing secretion; it reads MARAACLLRAISRALLLPLPLLLLLLLLLPPQLMA. Positions 36–101 are cleaved as a propeptide — activation peptide; the sequence is RARPPENHRH…VLNARNRQKR (66 aa). The Cysteine switch motif lies at 82 to 89; that stretch reads LRCGVPDP. Residues C84, H168, and D170 each contribute to the Zn(2+) site. Residues D175, G176, G178, and I180 each coordinate Ca(2+). The Zn(2+) site is built by H183, H196, and H218. E219 is an active-site residue. Positions 222 and 228 each coordinate Zn(2+). The tract at residues 260 to 279 is disordered; it reads YGRPQLTPTSPTPTLSSQAG. A compositionally biased stretch (low complexity) spans 263-277; that stretch reads PQLTPTSPTPTLSSQ. C297 and C483 are oxidised to a cystine. Hemopexin repeat units follow at residues 298–342, 343–385, 387–435, and 436–483; these read ETSF…WQGL, PSPV…KLGL, GSPV…WRGV, and PSEI…FFDC.

It belongs to the peptidase M10A family. Ca(2+) serves as cofactor. Requires Zn(2+) as cofactor. In terms of processing, the precursor is cleaved by a furin endopeptidase. Highly expressed in ovary and uterus.

It localises to the secreted. The protein localises to the extracellular space. Its subcellular location is the extracellular matrix. In terms of biological role, may play an important role in the progression of epithelial malignancies. The protein is Stromelysin-3 (Mmp11) of Rattus norvegicus (Rat).